Here is a 257-residue protein sequence, read N- to C-terminus: Type III pantothenate kinase (257 aa).

ATP is bound at residue 11-18 (DSGNTAIK). Residues Y96 and 103 to 106 (GCDR) each bind substrate. Catalysis depends on D105, which acts as the Proton acceptor. D125 contacts K(+). T128 is an ATP binding site. T179 is a substrate binding site.

This sequence belongs to the type III pantothenate kinase family. Homodimer. Requires NH4(+) as cofactor. It depends on K(+) as a cofactor.

Its subcellular location is the cytoplasm. The catalysed reaction is (R)-pantothenate + ATP = (R)-4'-phosphopantothenate + ADP + H(+). It participates in cofactor biosynthesis; coenzyme A biosynthesis; CoA from (R)-pantothenate: step 1/5. In terms of biological role, catalyzes the phosphorylation of pantothenate (Pan), the first step in CoA biosynthesis. In Nitrosomonas eutropha (strain DSM 101675 / C91 / Nm57), this protein is Type III pantothenate kinase.